The sequence spans 187 residues: Ribosome-recycling factor (187 aa).

It belongs to the RRF family.

It localises to the cytoplasm. Functionally, responsible for the release of ribosomes from messenger RNA at the termination of protein biosynthesis. May increase the efficiency of translation by recycling ribosomes from one round of translation to another. The chain is Ribosome-recycling factor from Rhodopseudomonas palustris (strain BisA53).